Reading from the N-terminus, the 560-residue chain is Arginine--tRNA ligase (560 aa).

The 'HIGH' region motif lies at 122–132 (ANPNGPLHIGH).

Belongs to the class-I aminoacyl-tRNA synthetase family.

The protein localises to the cytoplasm. The catalysed reaction is tRNA(Arg) + L-arginine + ATP = L-arginyl-tRNA(Arg) + AMP + diphosphate. The polypeptide is Arginine--tRNA ligase (argS) (Methanothermobacter thermautotrophicus (strain ATCC 29096 / DSM 1053 / JCM 10044 / NBRC 100330 / Delta H) (Methanobacterium thermoautotrophicum)).